Consider the following 55-residue polypeptide: Large ribosomal subunit protein bL33 (55 aa).

Belongs to the bacterial ribosomal protein bL33 family.

The protein is Large ribosomal subunit protein bL33 of Methylobacterium sp. (strain 4-46).